A 43-amino-acid polypeptide reads, in one-letter code: Protein PsbN (43 aa).

The helical transmembrane segment at V7–F27 threads the bilayer.

This sequence belongs to the PsbN family.

The protein resides in the plastid. Its subcellular location is the chloroplast thylakoid membrane. May play a role in photosystem I and II biogenesis. The polypeptide is Protein PsbN (Daucus carota (Wild carrot)).